A 468-amino-acid chain; its full sequence is Lipase 1 (468 aa).

Residues 1-16 form the signal peptide; it reads MRGIAVFLAFISLIFA. An N-linked (GlcNAc...) asparagine glycan is attached at asparagine 79. Cysteine 112 and cysteine 285 are oxidised to a cystine. Serine 196 acts as the Charge relay system in catalysis. 2 N-linked (GlcNAc...) asparagine glycosylation sites follow: asparagine 231 and asparagine 319. Active-site charge relay system residues include aspartate 348 and histidine 381. Cysteine 364 and cysteine 409 are joined by a disulfide. 3 N-linked (GlcNAc...) asparagine glycosylation sites follow: asparagine 417, asparagine 422, and asparagine 451.

This sequence belongs to the AB hydrolase superfamily. Lipase family. Class Lip subfamily.

It localises to the secreted. The catalysed reaction is a triacylglycerol + H2O = a diacylglycerol + a fatty acid + H(+). In terms of biological role, secreted lipase that is able to hydrolyze both the neutral triacylglycerols and the monopalmitate ester Tween 40, allowing the use of hydrolyzed products as carbon sources. Has broad lipolytic activity, which may be important for colonization and subsequent infection, therefore contributing to the persistence and virulence in human tissue. The polypeptide is Lipase 1 (Candida albicans (strain SC5314 / ATCC MYA-2876) (Yeast)).